We begin with the raw amino-acid sequence, 289 residues long: ATP synthase gamma chain (289 aa).

It belongs to the ATPase gamma chain family. As to quaternary structure, F-type ATPases have 2 components, CF(1) - the catalytic core - and CF(0) - the membrane proton channel. CF(1) has five subunits: alpha(3), beta(3), gamma(1), delta(1), epsilon(1). CF(0) has three main subunits: a, b and c.

The protein resides in the cell membrane. Produces ATP from ADP in the presence of a proton gradient across the membrane. The gamma chain is believed to be important in regulating ATPase activity and the flow of protons through the CF(0) complex. This Alkaliphilus metalliredigens (strain QYMF) protein is ATP synthase gamma chain.